Here is a 137-residue protein sequence, read N- to C-terminus: Large ribosomal subunit protein uL16 (137 aa).

The span at 1-14 shows a compositional bias: basic residues; sequence MLQPNRRKFRKEHK. The interval 1-22 is disordered; that stretch reads MLQPNRRKFRKEHKGRNEGLAT.

It belongs to the universal ribosomal protein uL16 family. Part of the 50S ribosomal subunit.

Functionally, binds 23S rRNA and is also seen to make contacts with the A and possibly P site tRNAs. The polypeptide is Large ribosomal subunit protein uL16 (Dechloromonas aromatica (strain RCB)).